A 247-amino-acid chain; its full sequence is 1-(5-phosphoribosyl)-5-[(5-phosphoribosylamino)methylideneamino] imidazole-4-carboxamide isomerase (247 aa).

The active-site Proton acceptor is Asp8. Catalysis depends on Asp129, which acts as the Proton donor.

This sequence belongs to the HisA/HisF family.

Its subcellular location is the cytoplasm. The enzyme catalyses 1-(5-phospho-beta-D-ribosyl)-5-[(5-phospho-beta-D-ribosylamino)methylideneamino]imidazole-4-carboxamide = 5-[(5-phospho-1-deoxy-D-ribulos-1-ylimino)methylamino]-1-(5-phospho-beta-D-ribosyl)imidazole-4-carboxamide. It functions in the pathway amino-acid biosynthesis; L-histidine biosynthesis; L-histidine from 5-phospho-alpha-D-ribose 1-diphosphate: step 4/9. This is 1-(5-phosphoribosyl)-5-[(5-phosphoribosylamino)methylideneamino] imidazole-4-carboxamide isomerase from Solidesulfovibrio magneticus (strain ATCC 700980 / DSM 13731 / RS-1) (Desulfovibrio magneticus).